The sequence spans 433 residues: Serine--tRNA ligase (433 aa).

235-237 (TSE) is an L-serine binding site. ATP is bound at residue 266 to 268 (RSE). An L-serine-binding site is contributed by E289. 353 to 356 (EISS) is a binding site for ATP. Residue S388 participates in L-serine binding.

Belongs to the class-II aminoacyl-tRNA synthetase family. Type-1 seryl-tRNA synthetase subfamily. Homodimer. The tRNA molecule binds across the dimer.

It localises to the cytoplasm. It carries out the reaction tRNA(Ser) + L-serine + ATP = L-seryl-tRNA(Ser) + AMP + diphosphate + H(+). It catalyses the reaction tRNA(Sec) + L-serine + ATP = L-seryl-tRNA(Sec) + AMP + diphosphate + H(+). Its pathway is aminoacyl-tRNA biosynthesis; selenocysteinyl-tRNA(Sec) biosynthesis; L-seryl-tRNA(Sec) from L-serine and tRNA(Sec): step 1/1. Its function is as follows. Catalyzes the attachment of serine to tRNA(Ser). Is also able to aminoacylate tRNA(Sec) with serine, to form the misacylated tRNA L-seryl-tRNA(Sec), which will be further converted into selenocysteinyl-tRNA(Sec). This chain is Serine--tRNA ligase, found in Burkholderia pseudomallei (strain 668).